The sequence spans 121 residues: Large ribosomal subunit protein uL22 (121 aa).

This sequence belongs to the universal ribosomal protein uL22 family. In terms of assembly, part of the 50S ribosomal subunit.

In terms of biological role, this protein binds specifically to 23S rRNA; its binding is stimulated by other ribosomal proteins, e.g. L4, L17, and L20. It is important during the early stages of 50S assembly. It makes multiple contacts with different domains of the 23S rRNA in the assembled 50S subunit and ribosome. Its function is as follows. The globular domain of the protein is located near the polypeptide exit tunnel on the outside of the subunit, while an extended beta-hairpin is found that lines the wall of the exit tunnel in the center of the 70S ribosome. The chain is Large ribosomal subunit protein uL22 from Parasynechococcus marenigrum (strain WH8102).